The chain runs to 501 residues: L-aspartate decarboxylase dtxS4 (501 aa).

106-108 provides a ligand contact to substrate; that stretch reads KLT. Position 320 is an N6-(pyridoxal phosphate)lysine (K320). Substrate is bound at residue R474.

It belongs to the group II decarboxylase family. Pyridoxal 5'-phosphate serves as cofactor.

It catalyses the reaction L-aspartate + H(+) = beta-alanine + CO2. The protein operates within secondary metabolite biosynthesis. Its function is as follows. L-aspartate decarboxylase; part of the gene cluster that mediates the biosynthesis of destruxins, insecticidal cyclic hexadepsipeptides which induce flaccid paralysis and visceral muscle contraction in insects through targeting the calcium channels and vacuolar-type ATPases. The aldo-keto reductase dtxS3 converts alpha-ketoisocaproic acid from deaminated leucine into alpha-hydroxyisocaproic acid (HIC), which is the first substrate for destruxin assembly by dtxS1. L-aspartate decarboxylase dtxS4 converts aspartic acid into beta-alanine, the last substrate for the destruxin assembly line performed by dtxS1. The nonribosomal peptide synthetase dtxS1 synthesizes destruxins B and B2, whereas the cytochrome P450 monooxygenase dtxS2 is required to convert destruxin B into other destruxin derivatives, including destructins C, D, A and E. Destruxin E-diol (ED) is further produced in a non-enzymatic manner from destruxin E. Destruxins play an important role in virulence and escape from insect host immune defenses. The sequence is that of L-aspartate decarboxylase dtxS4 from Metarhizium robertsii (strain ARSEF 23 / ATCC MYA-3075) (Metarhizium anisopliae (strain ARSEF 23)).